We begin with the raw amino-acid sequence, 249 residues long: uncharacterized protein (249 aa).

Residue I11–L34 participates in NADP(+) binding. Substrate is bound at residue S142. Y155 functions as the Proton acceptor in the catalytic mechanism.

This sequence belongs to the short-chain dehydrogenases/reductases (SDR) family.

This is an uncharacterized protein from Mycobacterium tuberculosis (strain ATCC 25618 / H37Rv).